The primary structure comprises 400 residues: Snake venom metalloproteinase H1 (400 aa).

The N-terminal stretch at 1–6 (FPYQGS) is a signal peptide. The propeptide occupies 7-176 (SIILESGNVN…KKASQLIVST (170 aa)). The Peptidase M12B domain maps to 180–377 (RYMEIVIVVD…ENPPCILNKP (198 aa)). Residues Glu-183 and Asp-267 each coordinate Ca(2+). 3 disulfides stabilise this stretch: Cys-291–Cys-372, Cys-331–Cys-356, and Cys-333–Cys-339. His-316 contributes to the Zn(2+) binding site. Glu-317 is an active-site residue. Zn(2+) contacts are provided by His-320 and His-326. Residues Cys-372, Asn-375, Val-387, Asn-390, Leu-392, Glu-394, and Asp-400 each coordinate Ca(2+). Positions 378–400 (LRTDTVSTPVSGNELLEAGKDYD) are excised as a propeptide.

Belongs to the venom metalloproteinase (M12B) family. P-I subfamily. As to quaternary structure, monomer. Zn(2+) serves as cofactor. As to expression, expressed by the venom gland.

The protein resides in the secreted. Its function is as follows. Snake venom metalloproteinase that impairs hemostasis in the envenomed animal. This chain is Snake venom metalloproteinase H1, found in Deinagkistrodon acutus (Hundred-pace snake).